A 29-amino-acid polypeptide reads, in one-letter code: Omega-conotoxin MVIIC (29 aa).

Residues 1-2 (TR) constitute a propeptide that is removed on maturation. Intrachain disulfides connect Cys-3–Cys-18, Cys-10–Cys-22, and Cys-17–Cys-28. Residue Cys-28 is modified to Cysteine amide.

Belongs to the conotoxin O1 superfamily. Not hydroxylated; hydroxylation, on a synthetic hydroxylated MVIIC, has a significant impact on the oxidative folding but not on the biological activity. As to expression, expressed by the venom duct.

The protein localises to the secreted. Functionally, omega-conotoxins act at presynaptic membranes, they bind and block voltage-gated calcium channels (Cav). This toxin preferentially blocks P/Q-type calcium channels (Cav2.1/CACNA1A) (IC(50)=0.60 nM). Also shows an inhibition on Cav2.2/CACNA1A channels (IC(50)=7.0 nM). This Conus magus (Magical cone) protein is Omega-conotoxin MVIIC.